Consider the following 300-residue polypeptide: MKIGIIMGGISTEREVSLNSGREVIKYLELLEHEIIPIIIDKKEDVMEKAKGIDFAFLALHGEFGEDGTVQSVLQTLDIPYSGCGPLTSAICMDKDMTKKILKYANINTADWVNVSSVENIDYEAIEKIGYPVFVKPNSGGSSVATNLVKDKEGIKEAVELALKYDKEVMIENYTKGEEITCCMLNGKMLPVLAIRPHAEFFDYTAKYADGGSDEVVIELEENLHKKVEEMALACWKELKCEVYVRVDMIVKDGIPYVLELNTLPGMTKNSLFPKSANAVGISFAELLNSIVKYSLEVER.

The ATP-grasp domain occupies 99–293 (KKILKYANIN…FAELLNSIVK (195 aa)). Position 126 to 181 (126 to 181 (IEKIGYPVFVKPNSGGSSVATNLVKDKEGIKEAVELALKYDKEVMIENYTKGEEIT)) interacts with ATP. 3 residues coordinate Mg(2+): Asp248, Glu260, and Asn262.

This sequence belongs to the D-alanine--D-alanine ligase family. The cofactor is Mg(2+). Requires Mn(2+) as cofactor.

It is found in the cytoplasm. The catalysed reaction is 2 D-alanine + ATP = D-alanyl-D-alanine + ADP + phosphate + H(+). The protein operates within cell wall biogenesis; peptidoglycan biosynthesis. In terms of biological role, cell wall formation. The sequence is that of D-alanine--D-alanine ligase from Clostridium botulinum (strain Langeland / NCTC 10281 / Type F).